A 492-amino-acid chain; its full sequence is Gamma-aminobutyric acid receptor subunit alpha-3 (492 aa).

The signal sequence occupies residues 1–28 (MIITQTSHCYMTSLGILFLINILPGTTG). The tract at residues 28–54 (GQGESRRQEPGDFVKQDIGGLSPKHAP) is disordered. Over 29–274 (QGESRRQEPG…MTTHFHLKRK (246 aa)) the chain is Extracellular. Positions 31 to 42 (ESRRQEPGDFVK) are enriched in basic and acidic residues. Residue Asn-63 is glycosylated (N-linked (GlcNAc...) asparagine). Arg-119 is a binding site for 4-aminobutanoate. 2 N-linked (GlcNAc...) asparagine glycosylation sites follow: Asn-163 and Asn-176. Residue Thr-182 participates in 4-aminobutanoate binding. Cys-191 and Cys-205 are disulfide-bonded. An N-linked (GlcNAc...) asparagine glycan is attached at Asn-228. A helical membrane pass occupies residues 275-295 (IGYFVIQTYLPCIMTVILSQV). Topologically, residues 296–305 (SFWLNRESVP) are cytoplasmic. The helical transmembrane segment at 306 to 325 (ARTVFGVTTVLTMTTLSISA) threads the bilayer. Over 326-336 (RNSLPKVAYAT) the chain is Extracellular. The helical transmembrane segment at 337–357 (AMDWFIAVCYAFVFSALIEFA) threads the bilayer. The Cytoplasmic portion of the chain corresponds to 358–457 (TVNYFTKRSW…TYNSVSKVDK (100 aa)). Ser-426 is subject to Phosphoserine. Thr-427 carries the post-translational modification Phosphothreonine. 2 positions are modified to phosphoserine: Ser-433 and Ser-442. The chain crosses the membrane as a helical span at residues 458 to 478 (ISRIIFPVLFAIFNLVYWATY). Residues 479-492 (VNRESAIKGMIRKQ) are Extracellular-facing.

This sequence belongs to the ligand-gated ion channel (TC 1.A.9) family. Gamma-aminobutyric acid receptor (TC 1.A.9.5) subfamily. GABRA3 sub-subfamily. Heteropentamer, formed by a combination of alpha (GABRA1-6), beta (GABRB1-3), gamma (GABRG1-3), delta (GABRD), epsilon (GABRE), rho (GABRR1-3), pi (GABRP) and theta (GABRQ) chains, each subunit exhibiting distinct physiological and pharmacological properties. Binds UBQLN1. Interacts with GPHN.

Its subcellular location is the postsynaptic cell membrane. It localises to the cell membrane. The enzyme catalyses chloride(in) = chloride(out). With respect to regulation, potentiated by etomidate, propofol, pregnanolone and flurazepam. Alpha subunit of the heteropentameric ligand-gated chloride channel gated by gamma-aminobutyric acid (GABA), a major inhibitory neurotransmitter in the brain. GABA-gated chloride channels, also named GABA(A) receptors (GABAAR), consist of five subunits arranged around a central pore and contain GABA active binding site(s) located at the alpha and beta subunit interface(s). When activated by GABA, GABAARs selectively allow the flow of chloride anions across the cell membrane down their electrochemical gradient. Chloride influx into the postsynaptic neuron following GABAAR opening decreases the neuron ability to generate a new action potential, thereby reducing nerve transmission. The protein is Gamma-aminobutyric acid receptor subunit alpha-3 of Homo sapiens (Human).